A 248-amino-acid polypeptide reads, in one-letter code: Probable transcriptional regulatory protein Acid_5948 (248 aa).

It belongs to the TACO1 family.

It localises to the cytoplasm. This chain is Probable transcriptional regulatory protein Acid_5948, found in Solibacter usitatus (strain Ellin6076).